The chain runs to 370 residues: Neutral protease 2 homolog AFUB_070680 (370 aa).

An N-terminal signal peptide occupies residues 1-19 (MKVTILASAILALINGALA). A propeptide spanning residues 20–172 (LPANTPTLDV…PQAIKLLDRR (153 aa)) is cleaved from the precursor. 2 disulfide bridges follow: cysteine 178–cysteine 250 and cysteine 257–cysteine 275. Histidine 300 lines the Zn(2+) pocket. Glutamate 301 is an active-site residue. Zn(2+) contacts are provided by histidine 304 and aspartate 315.

It belongs to the peptidase M35 family. Zn(2+) serves as cofactor.

The protein resides in the secreted. It catalyses the reaction Preferential cleavage of bonds with hydrophobic residues in P1'. Also 3-Asn-|-Gln-4 and 8-Gly-|-Ser-9 bonds in insulin B chain.. Its function is as follows. Secreted metalloproteinase that allows assimilation of proteinaceous substrates. Shows high activities on basic nuclear substrates such as histone and protamine. May be involved in virulence. This Aspergillus fumigatus (strain CBS 144.89 / FGSC A1163 / CEA10) (Neosartorya fumigata) protein is Neutral protease 2 homolog AFUB_070680.